Reading from the N-terminus, the 253-residue chain is NAC transcription factor 32 (253 aa).

The NAC domain maps to 10–160 (FPPGFRFHPT…DWVLCRIYNK (151 aa)). The DNA-binding element occupies 106-166 (VGIKKALVFY…IYNKKGVIEK (61 aa)).

As to expression, expressed in germinating seeds, roots, leaf veins, open flowers and silique stalks.

It is found in the nucleus. In terms of biological role, transcriptional activator that positively regulates age-dependent senescence, dark-induced leaf senescence and stress-induced senescence. Regulates leaf senescence through the modulation of the expression of senescence-associated genes SGR1/NYE1, SAG113 and SAUR36/SAG201, which are involved in chlorophyll degradation, and abscisic acid (ABA) and auxin promotion of senescence, respectively. Promotes reactive oxygen species (ROS) production during age-dependent and stress-induced senescence. Positively regulates auxin-mediated responses in roots. Stress-responsive NAC transcription factor involved in ABA-inducible leaf senescence signaling. Required for normal seed development and morphology. The chain is NAC transcription factor 32 from Arabidopsis thaliana (Mouse-ear cress).